The sequence spans 180 residues: Inner membrane-spanning protein YciB (180 aa).

A run of 5 helical transmembrane segments spans residues 22–42 (IFVA…FTWF), 50–70 (MTLV…AFHS), 72–92 (LFIK…LLVS), 121–141 (MSWA…AFWL), and 149–169 (FKVF…GVYI).

This sequence belongs to the YciB family.

It is found in the cell inner membrane. Plays a role in cell envelope biogenesis, maintenance of cell envelope integrity and membrane homeostasis. The protein is Inner membrane-spanning protein YciB of Yersinia enterocolitica serotype O:8 / biotype 1B (strain NCTC 13174 / 8081).